Here is a 279-residue protein sequence, read N- to C-terminus: Small ribosomal subunit protein uS2 (279 aa).

The protein belongs to the universal ribosomal protein uS2 family. Component of the small ribosomal subunit. Mature ribosomes consist of a small (40S) and a large (60S) subunit. The 40S subunit contains about 33 different proteins and 1 molecule of RNA (18S). The 60S subunit contains about 49 different proteins and 3 molecules of RNA (25S, 5.8S and 5S). Interacts with ribosomal protein S21.

The protein resides in the cytoplasm. Its function is as follows. Required for the assembly and/or stability of the 40S ribosomal subunit. Required for the processing of the 20S rRNA-precursor to mature 18S rRNA in a late step of the maturation of 40S ribosomal subunits. In Chlamydomonas reinhardtii (Chlamydomonas smithii), this protein is Small ribosomal subunit protein uS2.